The primary structure comprises 436 residues: GTPase Der (436 aa).

2 consecutive EngA-type G domains span residues 4–167 (PVVA…PKVE) and 176–351 (IRFC…ESHN). GTP contacts are provided by residues 10 to 17 (GRPNVGKS), 57 to 61 (DTGGI), 119 to 122 (NKVD), 182 to 189 (GRPNVGKS), 229 to 233 (DTAGM), and 294 to 297 (NKWD). Positions 352-436 (IRVQTNVLND…PIRIIARARD (85 aa)) constitute a KH-like domain.

This sequence belongs to the TRAFAC class TrmE-Era-EngA-EngB-Septin-like GTPase superfamily. EngA (Der) GTPase family. Associates with the 50S ribosomal subunit.

In terms of biological role, GTPase that plays an essential role in the late steps of ribosome biogenesis. The polypeptide is GTPase Der (Bacillus cytotoxicus (strain DSM 22905 / CIP 110041 / 391-98 / NVH 391-98)).